Here is a 75-residue protein sequence, read N- to C-terminus: Large ribosomal subunit protein bL31 (75 aa).

The Zn(2+) site is built by C16, C18, C37, and C40.

This sequence belongs to the bacterial ribosomal protein bL31 family. Type A subfamily. Part of the 50S ribosomal subunit. Zn(2+) is required as a cofactor.

Functionally, binds the 23S rRNA. The sequence is that of Large ribosomal subunit protein bL31 from Legionella pneumophila (strain Paris).